A 386-amino-acid polypeptide reads, in one-letter code: GLABROUS1 enhancer-binding protein-like 1 (386 aa).

2 disordered regions span residues 1–58 (MVTP…KKKK) and 197–314 (ESGE…DDDD). Basic and acidic residues predominate over residues 216–226 (EEIRDNDETAR). A coiled-coil region spans residues 221-285 (NDETARKAQQ…LKEHEEVANT (65 aa)). Residues 257 to 267 (DNNGTTQIAQQ) are compositionally biased toward polar residues. Positions 291-300 (NGAAKTTENG) are enriched in low complexity. The non-canonical leucine-zipper stretch occupies residues 354 to 375 (LSDEWKALCVEERRLNIKKLRF).

This sequence belongs to the GeBP family. Homo- and heterodimers. Interacts with GEBP, GPL2 and GPL3. Interacts with GEBP. In terms of tissue distribution, expressed in the apical meristem and young leaf primordia. Detected in the vascular tissues of cotyledons and leaves, in hydathodes and at the base of flowers and siliques, but not in roots.

The protein resides in the nucleus. In terms of biological role, probable transcription factor. May play redundant roles with GEBP and GPL2 in cytokinin responses by regulating the transcript levels of type-A ARR response genes. Involved in stress responses. Plays a repressive role in cell expansion by counteracting the positive role of CPR5 in this process, but does not regulate cell proliferation or endoreduplication. This Arabidopsis thaliana (Mouse-ear cress) protein is GLABROUS1 enhancer-binding protein-like 1.